The primary structure comprises 365 residues: MEIDEEEPMVFLDRTTRATRGKRMTKLLDDEVEEDEQFWNQEALKEEEHDDEYEAEREVADEFDSDFNDDEPEPDAVAVNEKELRDLPKKRLIYPGKTASKKKKKKTKVVSQLEYIPGDEKPGEELGNKEQEEKEENEAQEDMEGEKVIRKSTRTSVVVRQAERDALRAAIQATTKPIQRKKVGEEKRMTQEEMLLEAAQTEIMNLRNLERVLAREEEVKKKAIVHKAVYKGPQIRYHSKDGCNYLEFCNGASFNSELSTKSVPYPEKAVCVITGLPAKYRDPKTGLPYATRDAFKAIRERFMDEHDGLRKKMEMGDLFDTLVAKGFATKQKRTKIPKSNKSFSLRSSARFLSSESEEESEEDSD.

Disordered regions lie at residues 43–83 and 95–147; these read ALKE…NEKE and PGKT…EGEK. The segment covering 48-74 has biased composition (acidic residues); sequence EHDDEYEAEREVADEFDSDFNDDEPEP. The span at 99–108 shows a compositional bias: basic residues; that stretch reads ASKKKKKKTK. The span at 118–132 shows a compositional bias: basic and acidic residues; the sequence is GDEKPGEELGNKEQE. 2 coiled-coil regions span residues 123 to 150 and 184 to 225; these read GEELGNKEQEEKEENEAQEDMEGEKVIR and GEEK…KAIV. A compositionally biased stretch (acidic residues) spans 133–144; it reads EKEENEAQEDME. The tract at residues 333 to 365 is disordered; it reads RTKIPKSNKSFSLRSSARFLSSESEEESEEDSD. The span at 342–354 shows a compositional bias: low complexity; the sequence is SFSLRSSARFLSS. The segment covering 355–365 has biased composition (acidic residues); the sequence is ESEEESEEDSD.

It belongs to the VPS72/YL1 family. Component of the SWR1 chromatin-remodeling complex composed of at least ARP6/ESD1/SUF3, PIE1, SWC6, SWC2 and H2AZs (HTA8, HTA9, HTA11). Interacts directly with SWC6 and H2AZs, but not with ARP6.

Its function is as follows. Component of the SWR1 complex which mediates the ATP-dependent exchange of histone H2A for the H2A variant H2A.F/Z leading to transcriptional regulation of selected genes (e.g. FLC) by chromatin remodeling. This Arabidopsis thaliana (Mouse-ear cress) protein is SWR1 complex subunit 2 (SWC2).